We begin with the raw amino-acid sequence, 247 residues long: Epidermal cell differentiation inhibitor (247 aa).

The signal sequence occupies residues 1-35 (MKNKLLFKIFLSLSLALSVYSINDKIIEVSNTSLA). In terms of domain architecture, TR mART core spans 39 to 247 (KNFTDLDEAT…IIITAIVFKK (209 aa)). Active-site residues include Arg-120, Ser-173, and Glu-215.

To ADP-ribosyltransferase C3 of Clostridium.

Functionally, inhibits terminal differentiation of cultured mouse keratinocytes. In culture, also inhibits the differentiation of human keratinocytes. Probable ADP-ribosyltransferase. This is Epidermal cell differentiation inhibitor from Staphylococcus aureus.